A 179-amino-acid chain; its full sequence is ATP synthase subunit delta (179 aa).

Belongs to the ATPase delta chain family. As to quaternary structure, F-type ATPases have 2 components, F(1) - the catalytic core - and F(0) - the membrane proton channel. F(1) has five subunits: alpha(3), beta(3), gamma(1), delta(1), epsilon(1). F(0) has three main subunits: a(1), b(2) and c(10-14). The alpha and beta chains form an alternating ring which encloses part of the gamma chain. F(1) is attached to F(0) by a central stalk formed by the gamma and epsilon chains, while a peripheral stalk is formed by the delta and b chains.

It is found in the cell inner membrane. In terms of biological role, f(1)F(0) ATP synthase produces ATP from ADP in the presence of a proton or sodium gradient. F-type ATPases consist of two structural domains, F(1) containing the extramembraneous catalytic core and F(0) containing the membrane proton channel, linked together by a central stalk and a peripheral stalk. During catalysis, ATP synthesis in the catalytic domain of F(1) is coupled via a rotary mechanism of the central stalk subunits to proton translocation. This protein is part of the stalk that links CF(0) to CF(1). It either transmits conformational changes from CF(0) to CF(1) or is implicated in proton conduction. The sequence is that of ATP synthase subunit delta from Acidobacterium capsulatum (strain ATCC 51196 / DSM 11244 / BCRC 80197 / JCM 7670 / NBRC 15755 / NCIMB 13165 / 161).